Here is a 439-residue protein sequence, read N- to C-terminus: Xylose isomerase (439 aa).

Residues His-101 and Asp-104 contribute to the active site. Glu-232, Glu-268, His-271, Asp-296, Asp-307, Asp-309, and Asp-339 together coordinate Mg(2+).

Belongs to the xylose isomerase family. Homotetramer. Mg(2+) serves as cofactor.

Its subcellular location is the cytoplasm. The enzyme catalyses alpha-D-xylose = alpha-D-xylulofuranose. This Marinomonas sp. (strain MWYL1) protein is Xylose isomerase.